The sequence spans 279 residues: Lipid phosphate phosphatase epsilon 1, chloroplastic (279 aa).

The transit peptide at 1–88 directs the protein to the chloroplast; it reads MAASSSLLLL…SFINNSSEIR (88 aa). The next 5 helical transmembrane spans lie at 126–142, 164–184, 185–205, 219–239, and 255–275; these read LWAV…SVVL, SHAQ…MEWL, GTNG…SYFI, VVVG…MWNS, and VFLF…LNWF.

It belongs to the PA-phosphatase related phosphoesterase family. Expressed in root tips, root branch points, cotyledons and leaves.

The protein localises to the plastid. Its subcellular location is the chloroplast inner membrane. Inhibited by Mg(2+). Its function is as follows. Exhibits phosphatidate phosphatase (PAP) activity in vitro. May play a secondary role as PAP in plastids. The sequence is that of Lipid phosphate phosphatase epsilon 1, chloroplastic (LPPE1) from Arabidopsis thaliana (Mouse-ear cress).